The sequence spans 140 residues: Pro-variola growth factor (140 aa).

The N-terminal stretch at 1 to 18 is a signal peptide; it reads MSMKYLMLLFAAMIIRSF. Residues 19-100 are Extracellular-facing; it reads ANSGNAIETT…SEKPNTTTSY (82 aa). Asparagine 34 carries N-linked (GlcNAc...) asparagine; by host glycosylation. In terms of domain architecture, EGF-like spans 41-81; sequence AIRLCGPEGNGYCFHGICIHARDIDGMYCRCSHGYTGIRCQ. Intrachain disulfides connect cysteine 45–cysteine 58, cysteine 53–cysteine 69, and cysteine 71–cysteine 80. A glycan (N-linked (GlcNAc...) asparagine; by host) is linked at asparagine 95. A helical membrane pass occupies residues 101–121; sequence IPSPGIVLVLLVSIIMCCLLF. The Cytoplasmic portion of the chain corresponds to 122-140; that stretch reads VYRFTRRTNKLPLQDMVVP.

It belongs to the orthopoxvirus OPG019 family. Variola growth factor interacts with host EGFR and promotes EGFR dimerization.

The protein resides in the host membrane. It localises to the secreted. In terms of biological role, stimulates cellular proliferation (hyperplasia)and mobility around infected cells to promote rapid and efficient spread of infection. This effect is beneficial for virus replication in vivo, because poxviruses replicate possibly better in proliferating cells than in quiescent cells. Acts by binding host EGFR, inducing its dimerization, autophosphorylation and leading to activation of several cellular pathways regulating cell proliferation or cell survival. The activation by host EGFR of mitogen activated protein kinases (MAPK) and extracellular-signal regulated kinases (ERK) are essential for the positive effect of vaccinia growth factor on poxvirus virulence in vivo. The polypeptide is Pro-variola growth factor (OPG019) (Variola virus).